The chain runs to 368 residues: Peptide chain release factor 2 (368 aa).

At glutamine 250 the chain carries N5-methylglutamine.

This sequence belongs to the prokaryotic/mitochondrial release factor family. In terms of processing, methylated by PrmC. Methylation increases the termination efficiency of RF2.

It is found in the cytoplasm. In terms of biological role, peptide chain release factor 2 directs the termination of translation in response to the peptide chain termination codons UGA and UAA. This is Peptide chain release factor 2 from Rickettsia conorii (strain ATCC VR-613 / Malish 7).